Here is a 218-residue protein sequence, read N- to C-terminus: Small ribosomal subunit protein uS3 (218 aa).

One can recognise a KH type-2 domain in the interval isoleucine 38–lysine 106.

It belongs to the universal ribosomal protein uS3 family. In terms of assembly, part of the 30S ribosomal subunit. Forms a tight complex with proteins S10 and S14.

Functionally, binds the lower part of the 30S subunit head. Binds mRNA in the 70S ribosome, positioning it for translation. The protein is Small ribosomal subunit protein uS3 of Bacillus subtilis (strain 168).